We begin with the raw amino-acid sequence, 419 residues long: Zinc finger CCCH domain-containing protein 62 (419 aa).

The segment at 89–116 (SLRKWVCKYWKDGKCKRGEQCQFLHSWS) adopts a C3H1-type zinc-finger fold. WD repeat units follow at residues 129–168 (GHNKELKGIALPEGSDKLFSVSIDGTLRVWDCNSGQCVHS), 210–247 (GVVGQVNAMTIANGMLFAGTSSGSILVWKATTDSESDP), 256–293 (GHSGEVTCFAVGGQMLYSGSVDKTIKMWDLNTLQCIMT), 296–335 (QHTGTVTSLLCWDKCLISSSLDGTIKVWAYSENGILKVVQ), and 383–419 (FSTHTIATLTIGPQGLLFSGDESGNLRVWTLAAGNKV).

This Arabidopsis thaliana (Mouse-ear cress) protein is Zinc finger CCCH domain-containing protein 62 (ZFWD4).